A 469-amino-acid polypeptide reads, in one-letter code: Ribulose bisphosphate carboxylase large chain (469 aa).

Lys5 is subject to N6,N6,N6-trimethyllysine. 2 residues coordinate substrate: Asn114 and Thr164. Catalysis depends on Lys166, which acts as the Proton acceptor. Lys168 serves as a coordination point for substrate. Positions 192, 194, and 195 each coordinate Mg(2+). Lys192 is modified (N6-carboxylysine). The active-site Proton acceptor is the His285. 3 residues coordinate substrate: Arg286, His318, and Ser370.

It belongs to the RuBisCO large chain family. Type I subfamily. In terms of assembly, heterohexadecamer of 8 large chains and 8 small chains; disulfide-linked. The disulfide link is formed within the large subunit homodimers. Mg(2+) is required as a cofactor. In terms of processing, the disulfide bond which can form in the large chain dimeric partners within the hexadecamer appears to be associated with oxidative stress and protein turnover.

The protein resides in the plastid. It localises to the chloroplast. It carries out the reaction 2 (2R)-3-phosphoglycerate + 2 H(+) = D-ribulose 1,5-bisphosphate + CO2 + H2O. The enzyme catalyses D-ribulose 1,5-bisphosphate + O2 = 2-phosphoglycolate + (2R)-3-phosphoglycerate + 2 H(+). Functionally, ruBisCO catalyzes two reactions: the carboxylation of D-ribulose 1,5-bisphosphate, the primary event in carbon dioxide fixation, as well as the oxidative fragmentation of the pentose substrate in the photorespiration process. Both reactions occur simultaneously and in competition at the same active site. This chain is Ribulose bisphosphate carboxylase large chain, found in Antirhea lucida (Palo iloron).